The sequence spans 312 residues: DNA-directed RNA polymerase subunit alpha (312 aa).

The tract at residues 1–226 (MIEFEKPNIT…EHLNLFTNLT (226 aa)) is alpha N-terminal domain (alpha-NTD). The interval 243–312 (DDRILERTIE…DLGLGLKNDK (70 aa)) is alpha C-terminal domain (alpha-CTD).

It belongs to the RNA polymerase alpha chain family. In terms of assembly, homodimer. The RNAP catalytic core consists of 2 alpha, 1 beta, 1 beta' and 1 omega subunit. When a sigma factor is associated with the core the holoenzyme is formed, which can initiate transcription.

It catalyses the reaction RNA(n) + a ribonucleoside 5'-triphosphate = RNA(n+1) + diphosphate. In terms of biological role, DNA-dependent RNA polymerase catalyzes the transcription of DNA into RNA using the four ribonucleoside triphosphates as substrates. This Streptococcus sanguinis (strain SK36) protein is DNA-directed RNA polymerase subunit alpha.